We begin with the raw amino-acid sequence, 132 residues long: C-X-C motif chemokine 5 (132 aa).

A signal peptide spans methionine 1–alanine 40. Intrachain disulfides connect cysteine 53–cysteine 79 and cysteine 55–cysteine 95.

Belongs to the intercrine alpha (chemokine CxC) family. As to quaternary structure, monomer. Homodimer. GCP-2(1-78) and GCP-2(9-78) are produced by proteolytic cleavage after secretion from fibroblasts and epithelial cells. GCP-2(9-78) is the most prominent form. A number of additional N-terminal (processed between pos. 41 and 48) and C-terminal (processed between pos. 118 and 132) processed forms have been identified, probably also representing intermediate states.

The protein resides in the secreted. Its function is as follows. May participate in the recruitment of inflammatory cells by injured or infected tissue. GCP-2(1-78) and, more potent, GCP-2(9-78) attract neutrophils and are involved in neutrophil activation. In Mus musculus (Mouse), this protein is C-X-C motif chemokine 5 (Cxcl5).